We begin with the raw amino-acid sequence, 593 residues long: Multidrug resistance-like ATP-binding protein MdlB (593 aa).

The Cytoplasmic portion of the chain corresponds to Met-1–Leu-25. An ABC transmembrane type-1 domain is found at Leu-25–Gln-310. The helical transmembrane segment at Gly-26–Ile-46 threads the bilayer. At Ser-47–Lys-62 the chain is on the periplasmic side. The chain crosses the membrane as a helical span at residues Val-63–Tyr-83. Residues Ala-84–Val-140 are Cytoplasmic-facing. The helical transmembrane segment at Thr-141–Phe-161 threads the bilayer. The Periplasmic portion of the chain corresponds to Ser-162–Asp-164. The chain crosses the membrane as a helical span at residues Trp-165–Tyr-185. Residues Gln-186–Pro-254 are Cytoplasmic-facing. Residues Leu-255–Ala-275 traverse the membrane as a helical segment. Residues Ser-276–Thr-278 lie on the Periplasmic side of the membrane. The helical transmembrane segment at Ile-279–Ile-299 threads the bilayer. Residues Glu-300–Ala-593 lie on the Cytoplasmic side of the membrane. The ABC transporter domain maps to Ile-341–Leu-574. Position 374–381 (Gly-374–Ser-381) interacts with ATP.

This sequence belongs to the ABC transporter superfamily. Drug exporter-2 (TC 3.A.1.117) family.

The protein resides in the cell inner membrane. The catalysed reaction is ATP + H2O + xenobioticSide 1 = ADP + phosphate + xenobioticSide 2.. This chain is Multidrug resistance-like ATP-binding protein MdlB (mdlB), found in Escherichia coli O6:H1 (strain CFT073 / ATCC 700928 / UPEC).